The following is a 157-amino-acid chain: DNA gyrase inhibitor (157 aa).

It belongs to the DNA gyrase inhibitor family. Interacts with DNA gyrase.

The protein localises to the cytoplasm. In terms of biological role, inhibits the supercoiling activity of DNA gyrase. Acts by inhibiting DNA gyrase at an early step, prior to (or at the step of) binding of DNA by the gyrase. It protects cells against toxins that target DNA gyrase, by inhibiting activity of these toxins and reducing the formation of lethal double-strand breaks in the cell. The protein is DNA gyrase inhibitor of Klebsiella pneumoniae (strain 342).